Reading from the N-terminus, the 494-residue chain is Tetracenomycin biosynthesis bifunctional cyclase/O-methyl transferase TcmN (494 aa).

Residues 11-140 are polyketide cyclase; the sequence is VNAPFELVWD…TTTRANMERI (130 aa). Catalysis depends on serine 67, which acts as the Proton acceptor; for cyclase activity. Active-site proton donor; for cyclase activity residues include arginine 69 and arginine 82. The tract at residues 169-494 is methyltransferase; sequence LLLAASGRLA…TWTTLECRPV (326 aa). Residues aspartate 358 and 384 to 386 contribute to the S-adenosyl-L-methionine site; that span reads GDF. Histidine 405 acts as the Proton acceptor; for methyltransferase activity in catalysis.

This sequence in the C-terminal section; belongs to the class I-like SAM-binding methyltransferase superfamily. Cation-independent O-methyltransferase family. The tetracenomycin polyketide synthase (TCM PKS) is composed of a ketosynthase complex (TcmKL), an acyl carrier protein (TcmM), a cyclase (TcmN) and a probable second cyclase (TcmJ). TcmN is a homodimer in solution.

The enzyme catalyses 10 malonyl-CoA + 8 H(+) = tetracenomycin F2 + 10 CO2 + 10 CoA + 2 H2O. The protein operates within antibiotic biosynthesis; tetracenomycin C biosynthesis. Functionally, involved in the biosynthesis of tetracenomycin C (TCM C). Part of a type II polyketide synthase (PKS) that catalyzes the synthesis of tetracenomycin F2 (TCM F2), a precursor of TCM C, from malonyl-CoA. The TcmN N-terminal domain, when coupled with the other components of the PKS, catalyzes the cyclization and aromatization of the linear polyketide intermediate. Catalyzes the cyclization of the first and second rings. In addition, the C-terminal domain acts as a methyltransferase. It catalyzes the specific O-methylation of tetracenomycin D3 (TCM D3) to TCM B3, using S-adenosyl-L-methionine as the methyl donor. This chain is Tetracenomycin biosynthesis bifunctional cyclase/O-methyl transferase TcmN, found in Streptomyces glaucescens.